The sequence spans 202 residues: Imidazole glycerol phosphate synthase subunit HisH 2 (202 aa).

In terms of domain architecture, Glutamine amidotransferase type-1 spans 1-202; sequence MIVVIDYGVG…QLFKNFVELV (202 aa). Residue Cys80 is the Nucleophile of the active site. Active-site residues include His183 and Glu185.

As to quaternary structure, heterodimer of HisH and HisF.

Its subcellular location is the cytoplasm. The catalysed reaction is 5-[(5-phospho-1-deoxy-D-ribulos-1-ylimino)methylamino]-1-(5-phospho-beta-D-ribosyl)imidazole-4-carboxamide + L-glutamine = D-erythro-1-(imidazol-4-yl)glycerol 3-phosphate + 5-amino-1-(5-phospho-beta-D-ribosyl)imidazole-4-carboxamide + L-glutamate + H(+). It catalyses the reaction L-glutamine + H2O = L-glutamate + NH4(+). It functions in the pathway amino-acid biosynthesis; L-histidine biosynthesis; L-histidine from 5-phospho-alpha-D-ribose 1-diphosphate: step 5/9. Functionally, IGPS catalyzes the conversion of PRFAR and glutamine to IGP, AICAR and glutamate. The HisH subunit catalyzes the hydrolysis of glutamine to glutamate and ammonia as part of the synthesis of IGP and AICAR. The resulting ammonia molecule is channeled to the active site of HisF. The protein is Imidazole glycerol phosphate synthase subunit HisH 2 (hisH2) of Pseudomonas aeruginosa (strain ATCC 15692 / DSM 22644 / CIP 104116 / JCM 14847 / LMG 12228 / 1C / PRS 101 / PAO1).